The following is a 233-amino-acid chain: Rab-like protein 3 (233 aa).

Positions 1 to 233 (MASLDRVKVL…RFNFKSLHSD (233 aa)) are small GTPase-like. Residues 16–21 (GVGKSS), 148–150 (KFD), and 179–180 (DC) each bind GTP.

The protein belongs to the small GTPase superfamily. Rab family. In terms of assembly, homodimer.

Required for KRAS signaling regulation and modulation of cell proliferation. Regulator of KRAS prenylation, and probably prenylation of other small GTPases. Required for lymphocyte development and function. Not required for myeloid cell development. The chain is Rab-like protein 3 (rabl3) from Danio rerio (Zebrafish).